The following is a 158-amino-acid chain: Large ribosomal subunit protein uL15 (158 aa).

Positions 1–13 (MKLNEIKDNEGST) are enriched in basic and acidic residues. The interval 1–44 (MKLNEIKDNEGSTHSRKRLGRGIGSGSGKTAGRGVKGQKSRSGV) is disordered. Gly residues predominate over residues 21–35 (RGIGSGSGKTAGRGV).

Belongs to the universal ribosomal protein uL15 family. As to quaternary structure, part of the 50S ribosomal subunit.

In terms of biological role, binds to the 23S rRNA. The protein is Large ribosomal subunit protein uL15 of Rhizobium etli (strain ATCC 51251 / DSM 11541 / JCM 21823 / NBRC 15573 / CFN 42).